An 83-amino-acid polypeptide reads, in one-letter code: Large ribosomal subunit protein bL31 (83 aa).

The protein belongs to the bacterial ribosomal protein bL31 family. Type A subfamily. As to quaternary structure, part of the 50S ribosomal subunit.

Binds the 23S rRNA. This is Large ribosomal subunit protein bL31 from Gloeothece citriformis (strain PCC 7424) (Cyanothece sp. (strain PCC 7424)).